The sequence spans 159 residues: C-type lectin 1 (159 aa).

The first 23 residues, 1-23, serve as a signal peptide directing secretion; it reads MGRFIFISFGLLVVFFFLSGAKG. 4 cysteine pairs are disulfide-bonded: Cys26–Cys37, Cys54–Cys155, Cys61–Cys157, and Cys130–Cys147. Residues 33 to 156 enclose the C-type lectin domain; the sequence is MYGLCYKIFD…CKVKNAFLCQ (124 aa). The N-linked (GlcNAc...) asparagine glycan is linked to Asn118. A Sugar-binding motif is present at residues 119-121; it reads LTD. Ca(2+)-binding residues include Asp121, Asp127, and Asn143.

Belongs to the true venom lectin family. Homodimer; disulfide-linked. As to expression, expressed by the venom gland.

It localises to the secreted. Lectin which recognizes specific carbohydrate structures and agglutinates a variety of animal cells by binding to cell-surface glycoproteins and glycolipids. May be a calcium-dependent lectin. The polypeptide is C-type lectin 1 (Bitis gabonica (Gaboon adder)).